Consider the following 330-residue polypeptide: Protein LEG1 homolog (330 aa).

A signal peptide spans 1 to 20 (MAFLPSWVCVLVGSFSASLA). Asparagine 24 and asparagine 69 each carry an N-linked (GlcNAc...) asparagine glycan.

Belongs to the LEG1 family. In terms of tissue distribution, detected in saliva and in hypomineralized dental enamel (at protein level).

The protein resides in the secreted. In terms of biological role, may be involved in early liver development. This Homo sapiens (Human) protein is Protein LEG1 homolog.